A 164-amino-acid chain; its full sequence is Lipoprotein signal peptidase (164 aa).

Transmembrane regions (helical) follow at residues 12–32, 70–90, and 102–122; these read WLWLVVVVLIIDLGSKYLILQ, WFFAGIAIGISVILVVMMYRS, and ALIIGGALGNLFDRLWHGFVV. Residues D123 and D141 contribute to the active site. Residues 137-157 form a helical membrane-spanning segment; the sequence is FNLADTAICVGAALIVLEGFL.

This sequence belongs to the peptidase A8 family.

It is found in the cell inner membrane. It catalyses the reaction Release of signal peptides from bacterial membrane prolipoproteins. Hydrolyzes -Xaa-Yaa-Zaa-|-(S,diacylglyceryl)Cys-, in which Xaa is hydrophobic (preferably Leu), and Yaa (Ala or Ser) and Zaa (Gly or Ala) have small, neutral side chains.. The protein operates within protein modification; lipoprotein biosynthesis (signal peptide cleavage). Functionally, this protein specifically catalyzes the removal of signal peptides from prolipoproteins. This chain is Lipoprotein signal peptidase, found in Escherichia coli O6:K15:H31 (strain 536 / UPEC).